The sequence spans 82 residues: Cytochrome b559 subunit alpha (82 aa).

Residues 22 to 36 form a helical membrane-spanning segment; the sequence is VIHSITIPALFIAGW. Residue H24 coordinates heme.

This sequence belongs to the PsbE/PsbF family. Heterodimer of an alpha subunit and a beta subunit. PSII is composed of 1 copy each of membrane proteins PsbA, PsbB, PsbC, PsbD, PsbE, PsbF, PsbH, PsbI, PsbJ, PsbK, PsbL, PsbM, PsbT, PsbX, PsbY, PsbZ, Psb30/Ycf12, peripheral proteins PsbO, CyanoQ (PsbQ), PsbU, PsbV and a large number of cofactors. It forms dimeric complexes. It depends on heme b as a cofactor.

The protein resides in the cellular thylakoid membrane. Functionally, this b-type cytochrome is tightly associated with the reaction center of photosystem II (PSII). PSII is a light-driven water:plastoquinone oxidoreductase that uses light energy to abstract electrons from H(2)O, generating O(2) and a proton gradient subsequently used for ATP formation. It consists of a core antenna complex that captures photons, and an electron transfer chain that converts photonic excitation into a charge separation. The polypeptide is Cytochrome b559 subunit alpha (Trichodesmium erythraeum (strain IMS101)).